We begin with the raw amino-acid sequence, 224 residues long: PKHD-type hydroxylase KPN78578_12210 (224 aa).

A Fe2OG dioxygenase domain is found at 77 to 176 (TISAPLFNRY…RQASFLWIQS (100 aa)). The Fe cation site is built by His95, Asp97, and His157. Arg167 contacts 2-oxoglutarate.

It depends on Fe(2+) as a cofactor. Requires L-ascorbate as cofactor.

The protein is PKHD-type hydroxylase KPN78578_12210 of Klebsiella pneumoniae subsp. pneumoniae (strain ATCC 700721 / MGH 78578).